Reading from the N-terminus, the 117-residue chain is Cell cycle protein GpsB (117 aa).

A coiled-coil region spans residues 32–70 (LDNVIKDYDAFVKENQRLQDENERLLAKVDELTRQVQVG).

It belongs to the GpsB family. Forms polymers through the coiled coil domains. Interacts with PBP1, MreC and EzrA.

It localises to the cytoplasm. Its function is as follows. Divisome component that associates with the complex late in its assembly, after the Z-ring is formed, and is dependent on DivIC and PBP2B for its recruitment to the divisome. Together with EzrA, is a key component of the system that regulates PBP1 localization during cell cycle progression. Its main role could be the removal of PBP1 from the cell pole after pole maturation is completed. Also contributes to the recruitment of PBP1 to the division complex. Not essential for septum formation. The protein is Cell cycle protein GpsB of Levilactobacillus brevis (strain ATCC 367 / BCRC 12310 / CIP 105137 / JCM 1170 / LMG 11437 / NCIMB 947 / NCTC 947) (Lactobacillus brevis).